Here is an 81-residue protein sequence, read N- to C-terminus: Large ribosomal subunit protein bL31B (81 aa).

It belongs to the bacterial ribosomal protein bL31 family. Type B subfamily. In terms of assembly, part of the 50S ribosomal subunit.

In Lactiplantibacillus plantarum (strain ATCC BAA-793 / NCIMB 8826 / WCFS1) (Lactobacillus plantarum), this protein is Large ribosomal subunit protein bL31B (rpmE2).